The following is a 28-amino-acid chain: NSEDGSPYPGPGQQPNCCKWPIVTCCNR.

The protein belongs to the conotoxin T superfamily. In terms of processing, contains 2 disulfide bonds that can be either 'C1-C3, C2-C4' or 'C1-C4, C2-C3', since these disulfide connectivities have been observed for conotoxins with cysteine framework V (for examples, see AC P0DQQ7 and AC P81755). As to expression, expressed by the venom duct.

The protein resides in the secreted. This Californiconus californicus (California cone) protein is Conotoxin Cl5.3.